Consider the following 485-residue polypeptide: PTS system arbutin-, cellobiose-, and salicin-specific EIIBC component (485 aa).

One can recognise a PTS EIIB type-1 domain in the interval 1 to 88 (MAKNYAALAR…VSLLPGDMQP (88 aa)). The active-site Phosphocysteine intermediate; for EIIB activity is the Cys28. Transmembrane regions (helical) follow at residues 102-122 (IGAG…PAII), 147-167 (LTIL…MVAA), 177-197 (MSLA…ELMA), 207-227 (FALI…ALVM), 254-274 (LIVL…GIWI), 285-305 (IHGY…PLLV), 330-350 (VMPS…AVAW), 363-383 (AAAA…GVAI), 389-409 (LIAS…AGLA), and 433-453 (IVWV…LTLL). The PTS EIIC type-1 domain occupies 108 to 470 (DALIGTMSPL…VEEAAAQARK (363 aa)).

It is found in the cell inner membrane. Functionally, the phosphoenolpyruvate-dependent sugar phosphotransferase system (sugar PTS), a major carbohydrate active -transport system, catalyzes the phosphorylation of incoming sugar substrates concomitantly with their translocation across the cell membrane. This system is involved in arbutin, cellobiose, and salicin transport. In Escherichia coli (strain K12), this protein is PTS system arbutin-, cellobiose-, and salicin-specific EIIBC component (ascF).